We begin with the raw amino-acid sequence, 227 residues long: Probable septum site-determining protein MinC (227 aa).

Belongs to the MinC family. As to quaternary structure, interacts with MinD and FtsZ.

Cell division inhibitor that blocks the formation of polar Z ring septums. Rapidly oscillates between the poles of the cell to destabilize FtsZ filaments that have formed before they mature into polar Z rings. Prevents FtsZ polymerization. The polypeptide is Probable septum site-determining protein MinC (Bacillus pumilus (strain SAFR-032)).